The primary structure comprises 353 residues: Cruciform cutting endonuclease 1, mitochondrial (353 aa).

Aspartate 293 and aspartate 294 together coordinate Mg(2+).

Homodimer. It depends on Mg(2+) as a cofactor.

It localises to the mitochondrion. The enzyme catalyses Endonucleolytic cleavage at a junction such as a reciprocal single-stranded crossover between two homologous DNA duplexes (Holliday junction).. In terms of biological role, capable of resolving Holliday junctions. Specific for 4-way junctions. Seems to be important for the maintenance of mitochondrial DNA. Cleaves fixed junctions at the point of strand exchange. Cleaves after 5'-CT-3' sequence. The sequence is that of Cruciform cutting endonuclease 1, mitochondrial (CCE1) from Saccharomyces cerevisiae (strain ATCC 204508 / S288c) (Baker's yeast).